Here is a 123-residue protein sequence, read N- to C-terminus: MKWAYKEENNFEKRRAEGDKIRRKYPDRIPVIVEKAPKSKLHDLDKKKYLVPSDLTVGQFYFLIRKRIQLRPEDALFFFVNNVIPQTMTTMGQLYQDHHEEDLFLYIAYSDESVYGGEVEKKE.

The Phosphatidylethanolamine amidated glycine moiety is linked to residue Gly116. Residues 117-123 constitute a propeptide, removed in mature form; the sequence is GEVEKKE.

This sequence belongs to the ATG8 family. Interacts with sepa-1 (via the LIR motifs); the interaction is direct. Interacts with allo-1 (via the LIR motif). Interacts with sqst-1 (via the LIR motifs); the interaction is direct. Both lipidated and unlipidated forms interact with epg-7 (via the LIR motif); the interaction is direct. Interacts with epg-2 (via the LIR motifs); the interaction is direct. Interacts with atg-13; the interaction is direct. Interacts with unc-51 (via the LIR motif); the interaction is direct. Interacts with atg-7; the interaction is direct. Interacts with atg-3. The interaction with atg-7 and atg-3 may be required for the lipidation of lgg-1. Cleaved by atg-4.1 and/or atg-4.2, after Gly-116 to form a thioester bond with 'Cys-523' of atg-7 (E1-like activating enzyme) before being transferred to 'Cys-255' of atg-3 (E2 conjugating enzyme), in order to be amidated with phosphatidylethanolamine. This lipid modification anchors lgg-1 to membranes and can be reversed by atg-4.2, releasing soluble lgg-1. C-terminal cleavage is essential for autophagosome initiation and biogenesis. Lipidation is not essential for autophagy or development but the lipidated form is involved in cargo recognition and autophagosome biogenesis. Lipidation regulates lgg-2-positive autophagosome formation. In terms of tissue distribution, expressed in PLML touch receptor neuron and in the ventral nerve cord. Expressed in AIY interneurons.

Its subcellular location is the preautophagosomal structure. It is found in the cytoplasmic vesicle. The protein localises to the autophagosome. The protein resides in the autophagosome membrane. It localises to the lysosome lumen. Its subcellular location is the mitochondrion. It is found in the cytoplasm. The protein localises to the phagosome membrane. The protein resides in the cell membrane. It localises to the cell projection. Its subcellular location is the dendrite. It is found in the perikaryon. In terms of biological role, ubiquitin-like modifier involved in the formation of autophagosomal vacuoles (autophagosomes). When lipidated mediates tethering between adjacent membranes and stimulates membrane fusion during autophagy. Recruits lipidated-lgg-2 to maturing autophagosomes. Acts in the aggrephagy pathway, which is the macroautophagic degradation of ubiquitinated protein aggregates, and preferentially interacts with autophagy proteins and substrates containing LIR motifs to mediate autophagosome formation and protein aggregate degradation. In particular, binds to components of the unc-51-atg-13 complex to regulate autophagosome formation and cargo sequestration. Required for the degradation of specific sepa-1- and sqst-1-containing protein aggregates during embryogenesis. Involved in allophagy, which is an autophagic process in which paternal mitochondria and organelles are degraded during fertilization, and moreover is required for the formation of lgg-2-positive allophagic autophagosomes in embryos. Involved in the clearance of apoptotic cells by promoting the delivery of engulfed apoptotic cells to the lysosome. Plays a role in the distribution and clearance of germ cell specific P-granules from somatic cells. Also plays a role in the autophagy-mediated degradation of ribosomal RNA and ribosomal proteins in lysosomes. Involved in xenophagy, the autophagy-mediated degradation of pathogens and pathogen products, such as toxins. Required for normal survival when exposed to pathogenic bacteria S.typhimurium probably by promoting autophagic degradation of intracellular S.typhimurium. Also plays a role in membrane-pore repair. Plays a role in mitophagy. Essential for dauer development and longevity, including longevity in response to moderate, short-term heat shock, also known as a hormetic heat shock. The polypeptide is Protein lgg-1 (Caenorhabditis elegans).